We begin with the raw amino-acid sequence, 465 residues long: Protein Loquacious (465 aa).

Positions 1 to 337 are necessary for enhancing pre-miRNA processing by Dcr-1; that stretch reads MDQENFHGSS…DSICGELEGE (337 aa). The interval 1–379 is not required for interaction with Dcr-1; that stretch reads MDQENFHGSS…TLKNATGKKL (379 aa). The segment at 1–392 is important for homodimerization and interaction with Dcr-1; sequence MDQENFHGSS…QKTCLKNNKI (392 aa). A sufficient for binding RNA region spans residues 129 to 211; the sequence is NGLAMKTPVS…DKLIGAQLPE (83 aa). The necessary for promoting preferential binding of Dcr-2 to the less stably base paired ends of siRNAs stretch occupies residues 129–322; the sequence is NGLAMKTPVS…WMRLQETPID (194 aa). Positions 135–206 constitute a DRBM 1 domain; that stretch reads TPVSILQELL…ARALIDKLIG (72 aa). Residues 209 to 249 are enables simultaneous binding of both DRBM 1 and 2 domains to dsRNA; that stretch reads LPESPSSSAGPSVTGLTVAGSGGDGNANATGGGDASDKTVG. The segment at 210-246 is disordered; the sequence is PESPSSSAGPSVTGLTVAGSGGDGNANATGGGDASDK. Polar residues predominate over residues 211–223; it reads ESPSSSAGPSVTG. The tract at residues 220-465 is necessary and sufficient for enhancing processing of pre-miRNAs by Dcr-1; sequence SVTGLTVAGS…LEYLKIMTKK (246 aa). Residues 228–242 are compositionally biased toward gly residues; that stretch reads GSGGDGNANATGGGD. The segment at 245-322 is sufficient for binding RNA; sequence DKTVGNPIGW…WMRLQETPID (78 aa). The 69-residue stretch at 250 to 318 folds into the DRBM 2 domain; that stretch reads NPIGWLQEMC…AHRMWMRLQE (69 aa). The tract at residues 308–309 is necessary for binding pre-miRNA; it reads AA. The tract at residues 338 to 359 is required for binding to Dcr-2 and to fully enhance Dcr-2 mediated cleavage of 3' overhanging termini (3'ovr) and blunt termini (BLT) dsRNAs. However, this region is dispensable for binding the dsRNA substrates; the sequence is PRSSENYYGELKDISVPTLTTQ. The segment at 340 to 465 is necessary for interaction with Dcr-1; it reads SSENYYGELK…LEYLKIMTKK (126 aa). Positions 392–463 are sufficent for binding to Dcr-1; it reads IDYIKLLGEI…NALEYLKIMT (72 aa). The region spanning 393 to 461 is the DRBM 3 domain; sequence DYIKLLGEIA…AQNALEYLKI (69 aa).

As to quaternary structure, homodimer. In terms of assembly, interacts with dicer enzyme Dcr-1. Component of the miRNA-directed RNA-induced loading complex (miRLC), composed of at least Dcr-1, AGO1 and loqs isoform PB (loqs-PB), which processes pre-miRNAs and loads the resulting miRNAs into the Argonaute 1 (AGO1)-containing RNA-induced silencing complex (miRISC) to target the selective destruction of homologous RNAs. Interacts (via DRBM 3 domain) with dicer enzyme Dcr-1 (via helicase domain). Different regions of the Dcr-1-loqs-PB heterodimer collaborate to recognize, bind and position the pre-miRNA for Dcr-1 mediated cleavage. In the absence of miRNA substrates, the heterodimer favors a closed, catalytically incompetent, conformation, whereas binding of authentic pre-miRNA substrates stabilizes the relatively rare open, catalytically competent, conformation of the heterodimer. During substrate recognition, the Dcr-1 PAZ domain and pre-miRNA interact with the DRBM 1 domain of loqs-PB, which likely contributes to substrate recognition and stabilization. At the miRNA binding stage, the Dcr-1 DRBM domain and the loqs-PB DRBM domains then bind the pre-miRNA in tandem to form a tight 'belt' around the pre-miRNA stem, the pre-miRNA loop is docked in the loop-binding region formed by DUF283, DRBM and part of the helicase domain of Dcr-1, and the loqs-PB DRBM 1 and the wing domain of Dcr-1 act together to bind the 5' and 3' pre-miRNA termini within the PAZ and platform domains of Dcr-1. These interactions between the proteins and their pre-miRNA substrate stabilize a distorted form of the pre-miRNA and position the scissile phosphodiester bonds of the pre-miRNA at the RNase III catalytic cleavage sites of Dcr-1. Following Dcr-1 mediated cleavage, the miRNA duplex remains bound to loqs-PB DRBM 1, which dissociates from the Dcr-1 RNase III 1 domain but remains in contact with the PAZ and wing domains suggesting that the heterodimer presents the mature miRNA to AGO2 for loading into the RNA-induced silencing complex (miRISC). As to quaternary structure, able to interact with dicer enzyme Dcr-1. However, the relevance of such an interaction is unclear in vivo and another report found that it did not interact with Dcr-1. In terms of assembly, monomer. Interacts (via C-terminus) with dicer enzyme Dcr-2 (via N-terminus); interaction is required for RNAi activity in producing siRNAs from a subset of endo- and exo-dsRNAs, and in the alternative siRLC, the interaction enhances the binding preference of the protein for the thermodynamically more stable ends of endogenous siRNAs. Interaction with Dcr-2 is RNA independent, however the isoform must bind both dsRNA and Dcr-2 to enhance Dcr-2 cleavage activity. Does not interact with Dcr-1. As to expression, strong expression in males and females. Expression in ovaries is relatively weak. In terms of tissue distribution, strong expression in females and relatively weak expression in males. Strong expression in ovaries.

It is found in the cytoplasm. It localises to the cytosol. Double-stranded RNA-binding protein which can function in gene silencing by acting with Dcr-1 to enhance its ATP-independent processing of a specific subset of precursor micro-RNAs (pre-miRNAs) to mature miRNAs. Some reports found it was able to enhance the efficiency of pre-miRNA processing by Dcr-1, and can shift the cleavage site of Dcr-1 altering the length of the mature miRNAs produced by Dcr-1 alone. However, in contrast to isoform PB, it is not necessary or sufficient for enhancing miRNA biogenesis, and is not required for development or female germline stem cell (GSC) maintenance. Another report also found that it decreases binding of Dcr-1 to the miRNA substrate let-7. In terms of biological role, double-stranded RNA-binding protein which functions in gene silencing by acting with Dcr-1 to enhance its ATP-independent processing of a specific subset of precursor micro-RNAs (pre-miRNAs) to mature miRNAs. Function is essential for development and female germline stem cell (GSC) maintenance. Functions in miRNA-mediated gene silencing by enhancing the binding affinity and specific pre-miRNA processing activity of Dcr-1, and as part of the loqs-PB-Dcr-1 complex, is involved in substrate discrimination, correctly positioning the pre-miRNA in the Dcr-1 catalytic center for cleavage, and miRNA loading into the Argonaute 1 (Ago1)-containing RNA-induced silencing complex (miRISC). Increases the binding affinity of Dcr-1 to pre-miRNAs, thereby increasing dicing efficiency and broadening the range of substrates that can be processed by the dicer. It may also confer the substrate specificity of Dcr-1 towards pre-miRNAs, as in its absence Dcr-1 displays siRNA-generating activity towards long dsRNA substrates. It can also shift the cleavage site of Dcr-1 for a small number of pre-miRNAs, changing the length of the mature miRNAs produced by Dcr-1 alone. Increases the range of pre-miRNAs that can be processed by Dcr-1, by enhancing the dicing of suboptimal hairpin substrates including ones with mismatches at the dicing site. This function may also promote the generation of novel miRNA genes as it appears to have an important role in processing evolutionarily young miRNA genes, suggesting that it may also enhance dicing of substrates that have not acquired hairpin features required for efficient miRNA processing. As newly emerged miRNAs can have deleterious or beneficial effects on fitness, this function is likely part of a regulatory system that prevents excessive emergence of active miRNA genes and thus keeps them within an optimal range. Also forms a RISC loading complex (miRLC) with Dcr-1 to mediate Ago1-loading of mature miRNAs into the RNA-induced silencing complex (miRISC). In female ovaries, required for Dcr-1 to generate the twenty-three nucleotide isomiR variant of miR-307a which is able to repress its targets Gk2 and tara. Its function is as follows. Double-stranded RNA-binding protein which has an essential role in gene silencing (RNAi) by acting with Dcr-2 to enhance its ATP-dependent processing of a subset of endogenous (endo) and exogenous (exo) dsRNAs into short interfering RNAs (siRNAs). Functions in RNAi by increasing the initial binding affinity of Dcr-2 to certain dsRNA substrates, and in the absence of r2d2, may also function in siRNA loading into the Argonaute 2 (AGO2)-containing RNA-induced silencing complex (siRISC) and guide strand selection for target silencing by the siRISC. Promotes Dcr-2 cleavage of a subset of dsRNAs, including endo-dsRNAs derived from convergent transcription, inverted repeats and transposons. Also enables Dcr-2 to produce hairpin-derived endo-siRNAs in the presence of cellular inhibitory inorganic phosphate, likely by increasing the binding affinity of the enzyme to the hairpin dsRNAs allowing the dsRNA to displace phosphate bound to Dcr-2. According to many reports, the cleavage reaction mode of Dcr-2 changes according to the termini of the dsRNA substrate, with the enzyme displaying a preference for processing blunt termini (BLT), likely non-self dsRNAs, over dsRNAs with 2 nucleotides 3' overhanging (3'ovr) termini, which are typically the structure of endo-dsRNAs. According to many reports, interaction with Loqs-PD modifies the molecular recognition mechanisms of Dcr-2 towards sub-optimal 3'ovr dsRNA substrates and thus enables the dicer to cleave endo-dsRNA templates with diverse termini. However, according to another report, the mode of cleavage reaction is not affected by the presence or absence of loqs-PD. In the absence of r2d2, may also form an alternative RISC loading complex (siRLC) with Dcr-2 to mediate AGO2-loading of endo- and exo-siRNAs into the RNA-induced silencing complex (siRISC). Many reports suggest that loqs-PD and r2d2 function independently with dcr-2 in distinct siRNA pathways, and may even compete for binding to the enzyme. Loaded siRNAs serve as a guide to direct the siRISC to complementary RNAs to degrade them or prevent their translation. The siRLC plays an important role in the ATP-dependent asymmetry sensing of the duplex, and is therefore also responsible for the selection of the strand that ultimately acts as the guide siRNA for the siRISC. Thermodynamically asymmetric endo-siRNAs can be pre-oriented in the siRLC by the Loqs-PD and DCr-2 complex, which preferentially binds to the most thermodynamically stable strand prior to loading into the siRISC. Appears to be involved in promoting double-strand breaks (DSBs) following exposure to a low-dose/dose-rate (LDR) of ionizing radiation. This chain is Protein Loquacious, found in Drosophila melanogaster (Fruit fly).